A 641-amino-acid chain; its full sequence is 1-deoxy-D-xylulose-5-phosphate synthase (641 aa).

Thiamine diphosphate contacts are provided by residues H79 and 120-122 (AHS). D151 lines the Mg(2+) pocket. Residues 152 to 153 (GA), N180, Y290, and E372 each bind thiamine diphosphate. A Mg(2+)-binding site is contributed by N180.

This sequence belongs to the transketolase family. DXPS subfamily. Homodimer. Requires Mg(2+) as cofactor. Thiamine diphosphate is required as a cofactor.

The catalysed reaction is D-glyceraldehyde 3-phosphate + pyruvate + H(+) = 1-deoxy-D-xylulose 5-phosphate + CO2. It participates in metabolic intermediate biosynthesis; 1-deoxy-D-xylulose 5-phosphate biosynthesis; 1-deoxy-D-xylulose 5-phosphate from D-glyceraldehyde 3-phosphate and pyruvate: step 1/1. Its function is as follows. Catalyzes the acyloin condensation reaction between C atoms 2 and 3 of pyruvate and glyceraldehyde 3-phosphate to yield 1-deoxy-D-xylulose-5-phosphate (DXP). In Bradyrhizobium sp. (strain ORS 278), this protein is 1-deoxy-D-xylulose-5-phosphate synthase.